The following is a 121-amino-acid chain: MARIAGVNIPNHKHTEIGLTAIYGVGRSRARKICEATGVPFDKKVKDLTDADLEKLRDEVGKVTVEGDLRRETTMNIKRLMDLGCYRGMRHRKGLPMRGQRTRTNARTRKGPRKAGVALKK.

The tract at residues 91 to 121 (HRKGLPMRGQRTRTNARTRKGPRKAGVALKK) is disordered.

The protein belongs to the universal ribosomal protein uS13 family. Part of the 30S ribosomal subunit. Forms a loose heterodimer with protein S19. Forms two bridges to the 50S subunit in the 70S ribosome.

Its function is as follows. Located at the top of the head of the 30S subunit, it contacts several helices of the 16S rRNA. In the 70S ribosome it contacts the 23S rRNA (bridge B1a) and protein L5 of the 50S subunit (bridge B1b), connecting the 2 subunits; these bridges are implicated in subunit movement. Contacts the tRNAs in the A and P-sites. The chain is Small ribosomal subunit protein uS13 from Cupriavidus necator (strain ATCC 17699 / DSM 428 / KCTC 22496 / NCIMB 10442 / H16 / Stanier 337) (Ralstonia eutropha).